We begin with the raw amino-acid sequence, 63 residues long: Small ribosomal subunit protein eS30 (63 aa).

The interval 1–33 is disordered; sequence MGKVHGSLARAGKVKSQTPKVEKQEKPKKPQGR.

Belongs to the eukaryotic ribosomal protein eS30 family. Component of the small ribosomal subunit. Mature ribosomes consist of a small (40S) and a large (60S) subunit. The 40S subunit contains about 32 different proteins and 1 molecule of RNA (18S). The 60S subunit contains 45 different proteins and 3 molecules of RNA (25S, 5.8S and 5S).

Its subcellular location is the cytoplasm. In terms of biological role, component of the ribosome, a large ribonucleoprotein complex responsible for the synthesis of proteins in the cell. The small ribosomal subunit (SSU) binds messenger RNAs (mRNAs) and translates the encoded message by selecting cognate aminoacyl-transfer RNA (tRNA) molecules. The large subunit (LSU) contains the ribosomal catalytic site termed the peptidyl transferase center (PTC), which catalyzes the formation of peptide bonds, thereby polymerizing the amino acids delivered by tRNAs into a polypeptide chain. The nascent polypeptides leave the ribosome through a tunnel in the LSU and interact with protein factors that function in enzymatic processing, targeting, and the membrane insertion of nascent chains at the exit of the ribosomal tunnel. This chain is Small ribosomal subunit protein eS30 (RPS30), found in Candida albicans (strain SC5314 / ATCC MYA-2876) (Yeast).